The primary structure comprises 855 residues: RE1-silencing transcription factor (855 aa).

A C2H2-type 1 zinc finger spans residues 141–163 (FFCKPCQYQGENEQEFIVHIRTH). The interval 172-199 (NGGDSDEDLSADAGPQTSVPNAESAESN) is disordered. Residues 186 to 199 (PQTSVPNAESAESN) are compositionally biased toward polar residues. 7 C2H2-type zinc fingers span residues 204-226 (IRCERCGYNTNRFDHYMAHLKHH), 236-258 (FKCTICAYTTISQYHWKKHLRNH), 264-286 (FTCSQCSYFSDRKNNYIQHIRTH), 292-314 (FQCIYCEYSSSQKTHLTRHMRTH), 320-343 (FKCDNCSYLAANQHEVTRHARQVH), 349-371 (LSCPYCQYKTADRSNFKKHVELH), and 377-400 (FLCPVCKYAASKKCNLQYHIKSRH). The tract at residues 458 to 811 (NAVVETEKSS…ETPTEERDAS (354 aa)) is disordered. Composition is skewed to basic and acidic residues over residues 462 to 472 (ETEKSSKKNMD), 481 to 496 (NEKKSSSKNDPKEKTA), and 504 to 535 (AVKDTEETQTEDTRVNNKKETKKAVKSAEKAL). A compositionally biased stretch (polar residues) spans 548–569 (SSVQQQSDDCEQTQHTPQQNET). The span at 570–580 (QENRPEKENRS) shows a compositional bias: basic and acidic residues. Positions 594-604 (QTKKPCKKQTK) are enriched in basic residues. Residues 628–638 (RKAENPAEPKQ) show a composition bias toward basic and acidic residues. The segment covering 639-648 (RIKRTKKKKD) has biased composition (basic residues). Polar residues predominate over residues 652-662 (PTTSEANQTNP). Basic and acidic residues-rich tracts occupy residues 711–721 (PAVEDVQRPLE) and 799–811 (KLPETPTEERDAS). A C2H2-type 9 zinc finger spans residues 818–840 (HTCIFCDRSFALEMDYRKHLNRH).

The protein resides in the nucleus. Its subcellular location is the cytoplasm. In terms of biological role, transcriptional repressor which binds neuron-restrictive silencer element (NRSE) and represses neuronal gene transcription in non-neuronal cells. The polypeptide is RE1-silencing transcription factor (rest) (Danio rerio (Zebrafish)).